Reading from the N-terminus, the 435-residue chain is Oocyte zinc finger protein XlCOF22 (435 aa).

A disordered region spans residues 71-92 (NANTSAHFSRNRDSDKHERTHT). The span at 80–91 (RNRDSDKHERTH) shows a compositional bias: basic and acidic residues. 12 consecutive C2H2-type zinc fingers follow at residues 97-120 (HSCS…RQSH), 126-148 (FSCS…QRTH), 154-176 (FCCF…RRTH), 182-204 (FSCL…QRTH), 210-232 (FSCL…QRTH), 238-260 (FSCL…QRTH), 266-288 (FSCF…QRTH), 294-316 (FSCS…QRTH), 322-345 (YSCS…RRTH), 351-373 (FSCS…QRTH), 379-402 (FSCS…RQTH), and 408-430 (VSCS…FKIH).

This sequence belongs to the krueppel C2H2-type zinc-finger protein family.

Its subcellular location is the nucleus. May be involved in transcriptional regulation. The sequence is that of Oocyte zinc finger protein XlCOF22 from Xenopus laevis (African clawed frog).